The chain runs to 464 residues: Bifunctional protein GlmU (464 aa).

Residues 1–236 (MRAVILAAGL…PTEALGVNTR (236 aa)) form a pyrophosphorylase region. UDP-N-acetyl-alpha-D-glucosamine is bound by residues 6-9 (LAAG), Lys-20, and 77-78 (GT). Residue Asp-102 participates in Mg(2+) binding. UDP-N-acetyl-alpha-D-glucosamine is bound by residues Gly-145, Glu-161, Asn-176, and Asn-234. Mg(2+) is bound at residue Asn-234. Residues 237-257 (WDLALVENVIKLKIARYWAER) are linker. An N-acetyltransferase region spans residues 258–464 (GVTVHYPETV…GRGKKKLQKD (207 aa)). Arg-340 and Lys-358 together coordinate UDP-N-acetyl-alpha-D-glucosamine. His-370 acts as the Proton acceptor in catalysis. UDP-N-acetyl-alpha-D-glucosamine-binding residues include Tyr-373 and Asn-384. Acetyl-CoA contacts are provided by residues Ala-387, 393-394 (NY), Ser-412, Gly-430, and Arg-447.

The protein in the N-terminal section; belongs to the N-acetylglucosamine-1-phosphate uridyltransferase family. In the C-terminal section; belongs to the transferase hexapeptide repeat family. In terms of assembly, homotrimer. The cofactor is Mg(2+).

Its subcellular location is the cytoplasm. It carries out the reaction alpha-D-glucosamine 1-phosphate + acetyl-CoA = N-acetyl-alpha-D-glucosamine 1-phosphate + CoA + H(+). It catalyses the reaction N-acetyl-alpha-D-glucosamine 1-phosphate + UTP + H(+) = UDP-N-acetyl-alpha-D-glucosamine + diphosphate. It functions in the pathway nucleotide-sugar biosynthesis; UDP-N-acetyl-alpha-D-glucosamine biosynthesis; N-acetyl-alpha-D-glucosamine 1-phosphate from alpha-D-glucosamine 6-phosphate (route II): step 2/2. The protein operates within nucleotide-sugar biosynthesis; UDP-N-acetyl-alpha-D-glucosamine biosynthesis; UDP-N-acetyl-alpha-D-glucosamine from N-acetyl-alpha-D-glucosamine 1-phosphate: step 1/1. It participates in bacterial outer membrane biogenesis; LPS lipid A biosynthesis. Catalyzes the last two sequential reactions in the de novo biosynthetic pathway for UDP-N-acetylglucosamine (UDP-GlcNAc). The C-terminal domain catalyzes the transfer of acetyl group from acetyl coenzyme A to glucosamine-1-phosphate (GlcN-1-P) to produce N-acetylglucosamine-1-phosphate (GlcNAc-1-P), which is converted into UDP-GlcNAc by the transfer of uridine 5-monophosphate (from uridine 5-triphosphate), a reaction catalyzed by the N-terminal domain. The protein is Bifunctional protein GlmU of Aquifex aeolicus (strain VF5).